The following is a 206-amino-acid chain: Protease (206 aa).

Active-site residues include histidine 54, aspartate 71, and cysteine 122.

This sequence belongs to the peptidase C5 family. As to quaternary structure, interacts with protease cofactor pVI-C; this interaction is necessary for protease activation.

It localises to the virion. The protein localises to the host nucleus. It catalyses the reaction Cleaves proteins of the adenovirus and its host cell at two consensus sites: -Yaa-Xaa-Gly-Gly-|-Xaa- and -Yaa-Xaa-Gly-Xaa-|-Gly- (in which Yaa is Met, Ile or Leu, and Xaa is any amino acid).. Its activity is regulated as follows. Requires DNA and protease cofactor for maximal activation. Inside nascent virions, becomes partially activated by binding to the viral DNA, allowing it to cleave the cofactor that binds to the protease and fully activates it. Actin, like the viral protease cofactor, seems to act as a cofactor in the cleavage of cytokeratin 18 and of actin itself. Functionally, cleaves viral precursor proteins (pTP, pIIIa, pVI, pVII, pVIII, and pX) inside newly assembled particles giving rise to mature virions. Protease complexed to its cofactor slides along the viral DNA to specifically locate and cleave the viral precursors. Mature virions have a weakened organization compared to the unmature virions, thereby facilitating subsequent uncoating. Without maturation, the particle lacks infectivity and is unable to uncoat. Late in adenovirus infection, in the cytoplasm, may participate in the cytoskeleton destruction. Cleaves host cell cytoskeletal keratins K7 and K18. This Homo sapiens (Human) protein is Protease.